The chain runs to 261 residues: uncharacterized protein (261 aa).

The first 22 residues, Met-1–Gly-22, serve as a signal peptide directing secretion. Cys-23 is lipidated: N-palmitoyl cysteine. The S-diacylglycerol cysteine moiety is linked to residue Cys-23.

The protein belongs to the staphylococcal tandem lipoprotein family.

The protein resides in the cell membrane. This is an uncharacterized protein from Staphylococcus aureus (strain Mu50 / ATCC 700699).